A 711-amino-acid chain; its full sequence is Polyribonucleotide nucleotidyltransferase (711 aa).

Residues Asp494 and Asp500 each contribute to the Mg(2+) site. Positions 560–620 constitute a KH domain; sequence PKIEIFGVDP…INVENAKSDI (61 aa). An S1 motif domain is found at 651-710; that stretch reads GEEFDGVVKKIMDFGAFISLKDGIDGLLHVSKIKTQLSEGDTLRVKVEEIKRGKISLELC.

It belongs to the polyribonucleotide nucleotidyltransferase family. Mg(2+) is required as a cofactor.

It localises to the cytoplasm. The enzyme catalyses RNA(n+1) + phosphate = RNA(n) + a ribonucleoside 5'-diphosphate. Its function is as follows. Involved in mRNA degradation. Catalyzes the phosphorolysis of single-stranded polyribonucleotides processively in the 3'- to 5'-direction. This Campylobacter hominis (strain ATCC BAA-381 / DSM 21671 / CCUG 45161 / LMG 19568 / NCTC 13146 / CH001A) protein is Polyribonucleotide nucleotidyltransferase.